Reading from the N-terminus, the 67-residue chain is DNA-directed RNA polymerase subunit Rpo10 (67 aa).

Residues Cys-7, Cys-10, Cys-44, and Cys-45 each contribute to the Zn(2+) site.

Belongs to the archaeal Rpo10/eukaryotic RPB10 RNA polymerase subunit family. In terms of assembly, part of the RNA polymerase complex. Zn(2+) is required as a cofactor.

Its subcellular location is the cytoplasm. It catalyses the reaction RNA(n) + a ribonucleoside 5'-triphosphate = RNA(n+1) + diphosphate. DNA-dependent RNA polymerase (RNAP) catalyzes the transcription of DNA into RNA using the four ribonucleoside triphosphates as substrates. This is DNA-directed RNA polymerase subunit Rpo10 from Caldivirga maquilingensis (strain ATCC 700844 / DSM 13496 / JCM 10307 / IC-167).